Reading from the N-terminus, the 390-residue chain is Zinc finger CCCH domain-containing protein 46 (390 aa).

A C3H1-type zinc finger spans residues 2–29 (SRRQEICRNFQRGSCKYGAQCRYLHASP). The interval 27–129 (ASPHQQQQQQ…AAHTSCEDPQ (103 aa)) is disordered. The segment covering 48-76 (GSRQQQQPSFGSQFQQQQQQQQKPNPFGF) has biased composition (low complexity). Residues 106 to 129 (PTKQTEAVQPPQAQAAHTSCEDPQ) are compositionally biased toward polar residues. Residues 146 to 211 (WKLTCYAHLR…FTNLLNSARP (66 aa)) are required for transcriptional activation activity. Positions 230–248 (SSFGASQTNGPPVFSSFSQ) are enriched in polar residues. The disordered stretch occupies residues 230–284 (SSFGASQTNGPPVFSSFSQIGAATNIGPGPGTTAPGMPASSPFGHPSSAPLAAPT). Residues 250–268 (GAATNIGPGPGTTAPGMPA) show a composition bias toward low complexity.

Interacts with GSK1 and GSK4. Phosphorylated on serine and threonine residues by GSK1. Phosphorylation represses nuclear localization. Expressed in the adaxial face of the collar, nodes and the basal region of elongating internodes.

The protein localises to the nucleus. The protein resides in the cytoplasm. Its function is as follows. Transcriptional activator that binds double-stranded DNA and the single-stranded RNA polymers poly(rA), poly(rU) and poly(rG), but not poly(rC). Mediates optimal plant architecture through brassinosteroid (BR) signaling. May act as a negative regulator in sterol homeostasis. Acts as a negative regulator of BR signaling. Binds to the specific DNA sequence 5'-CTCGC-3' of BZR1 promoter and negatively regulates BZR1. Acts as an antagonistic transcription factor of BZR1 to attenuate the BR signaling pathway and regulate leaf bending. Represses the expression of ILI1, and activates that of IBH1 to balance the regulation activity of BZR1. This chain is Zinc finger CCCH domain-containing protein 46, found in Oryza sativa subsp. japonica (Rice).